Here is a 1782-residue protein sequence, read N- to C-terminus: A-kinase anchor protein 12 (1782 aa).

Disordered regions lie at residues 1–53 (MGAG…DPAT), 71–169 (QDEL…QAND), 189–400 (KTEK…APLA), 421–886 (VSTV…ELSE), 938–1089 (EREV…LKKE), 1105–1134 (PFTQ…ESSE), 1157–1274 (AIPP…ADEK), and 1305–1355 (KGEG…HVNE). Gly-2 carries N-myristoyl glycine lipidation. Phosphoserine is present on residues Ser-11, Ser-19, Ser-28, Ser-75, and Ser-96. Residues 16–53 (PEGSSTPAEPEPSGGGPSAEAAPDTTADPAIAASDPAT) show a composition bias toward low complexity. Over residues 108 to 125 (GQRDSEDVSKRDSDKEMA) the composition is skewed to basic and acidic residues. Residues 145–154 (IIEQIPSSES) show a composition bias toward low complexity. Ser-154 is subject to Phosphoserine. The segment covering 157–168 (EELTQPTESQAN) has biased composition (polar residues). Phosphoserine is present on residues Ser-219, Ser-248, Ser-258, Ser-280, Ser-283, Ser-286, Ser-347, and Ser-371. The segment covering 226 to 249 (ASKESEPKQSTEKPEETLKREQSH) has biased composition (basic and acidic residues). Residues 266–557 (KEEGEEKQEK…TQVPADSPDS (292 aa)) form an involved in PKC-binding region. 2 stretches are compositionally biased toward basic and acidic residues: residues 315-347 (KPKE…EVAS) and 363-379 (ESAH…KVEL). Position 374 is a phosphotyrosine (Tyr-374). Phosphoserine is present on residues Ser-381 and Ser-392. The span at 423–435 (TVEERTEEQKTEV) shows a compositional bias: basic and acidic residues. Over residues 446-456 (ELVEMDAEPQE) the composition is skewed to acidic residues. Residues 458-468 (EPAKELVKLKE) are compositionally biased toward basic and acidic residues. Phosphoserine is present on residues Ser-483 and Ser-505. The span at 528–537 (LSGKKQKGKR) shows a compositional bias: basic residues. Residues Ser-554, Ser-557, Ser-598, Ser-612, Ser-627, and Ser-629 each carry the phosphoserine modification. Residues 607 to 627 (VTPWASFKKMVTPKKRVRRPS) carry the AKAP CaM-binding 1 motif. A compositionally biased stretch (basic and acidic residues) spans 625-639 (RPSESDKEDELDKVK). Low complexity predominate over residues 640–652 (SATLSSTESTASE). Thr-642 is modified (phosphothreonine). Residues Ser-644, Ser-645, Ser-648, and Ser-651 each carry the phosphoserine modification. Residues 655 to 674 (EEMKGSVEEPKPEEPKRKVD) show a composition bias toward basic and acidic residues. A phosphoserine mark is found at Ser-696, Ser-697, and Ser-698. A compositionally biased stretch (basic and acidic residues) spans 708 to 724 (GGDHQKADEAGKDKETG). Residues 739 to 749 (QGSSSPEQAGS) are compositionally biased toward polar residues. 3 positions are modified to phosphoserine: Ser-749, Ser-761, and Ser-787. Residues 756–776 (VSTWESFKRLVTPRKKSKSKL) carry the AKAP CaM-binding 2 motif. Residues 792 to 803 (STPDTEPGKEES) are compositionally biased toward basic and acidic residues. Residues 801–821 (EESWVSIKKFIPGRRKKRPDG) carry the AKAP CaM-binding 3 motif. The residue at position 806 (Ser-806) is a Phosphoserine. The span at 986 to 997 (GAEEGTEASAAE) shows a compositional bias: low complexity. Lys-1051 participates in a covalent cross-link: Glycyl lysine isopeptide (Lys-Gly) (interchain with G-Cter in SUMO1). Residues 1072–1089 (AEAERPEEQAEASGLKKE) show a composition bias toward basic and acidic residues. A compositionally biased stretch (polar residues) spans 1164–1174 (ETPTDSETDGS). Composition is skewed to basic and acidic residues over residues 1187-1198 (QKDEIVEIHEEN) and 1231-1251 (EETK…KEVS). The span at 1253 to 1267 (ETVSILSKTEGTQEA) shows a compositional bias: polar residues. A phosphoserine mark is found at Ser-1328 and Ser-1331. Residues 1333-1355 (VEREMVVQVEREKTEAEPTHVNE) show a composition bias toward basic and acidic residues. Ser-1391 and Ser-1395 each carry phosphoserine. An RII-binding region spans residues 1541-1554 (ELETKSSKLVQNII). The segment at 1584 to 1782 (KADSQDAGQE…ESAKSELTES (199 aa)) is disordered. Ser-1587 bears the Phosphoserine mark. Over residues 1603–1612 (ASAQDETPIT) the composition is skewed to polar residues. Basic and acidic residues-rich tracts occupy residues 1629–1639 (DISKDMSEASE) and 1675–1699 (VPED…KEDE). A Phosphoserine modification is found at Ser-1727. 2 stretches are compositionally biased toward basic and acidic residues: residues 1734–1757 (KQKE…ESDK) and 1766–1782 (ELQK…LTES).

As to quaternary structure, binds to dimeric RII-alpha regulatory subunit of PKC. Expressed in endothelial cells, cultured fibroblasts and osteosarcoma, but not in platelets, leukocytes, monocytic cell lines or peripherical blood cells.

It localises to the cytoplasm. The protein localises to the cell cortex. The protein resides in the cytoskeleton. It is found in the membrane. Anchoring protein that mediates the subcellular compartmentation of protein kinase A (PKA) and protein kinase C (PKC). This is A-kinase anchor protein 12 (AKAP12) from Homo sapiens (Human).